Here is a 508-residue protein sequence, read N- to C-terminus: Catalase (508 aa).

The N-terminal stretch at 1–21 is a signal peptide; the sequence is MHMSKSFLLISMGLASISVHA. Active-site residues include His72 and Asn145. Tyr353 is a binding site for heme. Over residues 373 to 392 the composition is skewed to polar residues; the sequence is PKSPVANHNQDGPSNNSTGL. Residues 373-396 form a disordered region; the sequence is PKSPVANHNQDGPSNNSTGLGNVD.

The protein belongs to the catalase family. The cofactor is heme.

The protein localises to the periplasm. The catalysed reaction is 2 H2O2 = O2 + 2 H2O. Functionally, decomposes hydrogen peroxide into water and oxygen; serves to protect cells from the toxic effects of hydrogen peroxide. In Vibrio vulnificus (strain CMCP6), this protein is Catalase.